The chain runs to 491 residues: Cobyric acid synthase (491 aa).

Residues 250 to 437 form the GATase cobBQ-type domain; that stretch reads RLRVVVPVLP…LHGIFDHPAA (188 aa). Cys-331 (nucleophile) is an active-site residue. His-429 is an active-site residue.

This sequence belongs to the CobB/CobQ family. CobQ subfamily.

It participates in cofactor biosynthesis; adenosylcobalamin biosynthesis. Catalyzes amidations at positions B, D, E, and G on adenosylcobyrinic A,C-diamide. NH(2) groups are provided by glutamine, and one molecule of ATP is hydrogenolyzed for each amidation. This is Cobyric acid synthase from Xanthomonas campestris pv. campestris (strain B100).